The sequence spans 217 residues: Ras-related protein RABA5b (217 aa).

GTP is bound at residue 19 to 26; that stretch reads GDSAVGKS. The Effector region motif lies at 41 to 49; that stretch reads SKATIGVEF. GTP is bound by residues 67-71, 125-128, and 155-156; these read DTAGQ, NKCD, and SA. S-geranylgeranyl cysteine attachment occurs at residues Cys214 and Cys215.

It belongs to the small GTPase superfamily. Rab family.

The protein localises to the cell membrane. Functionally, intracellular vesicle trafficking and protein transport. This chain is Ras-related protein RABA5b (RABA5B), found in Arabidopsis thaliana (Mouse-ear cress).